We begin with the raw amino-acid sequence, 652 residues long: tRNA-guanine(15) transglycosylase (652 aa).

Catalysis depends on Asp-88, which acts as the Nucleophile. 2 residues coordinate substrate: Asp-123 and Ala-194. Residues Cys-280, Cys-282, and Cys-285 each coordinate Zn(2+). The PUA domain occupies 577 to 652 (KYRVVIDSEV…AAVSVRSGFK (76 aa)).

Belongs to the archaeosine tRNA-ribosyltransferase family. Zn(2+) serves as cofactor.

The enzyme catalyses guanosine(15) in tRNA + 7-cyano-7-deazaguanine = 7-cyano-7-carbaguanosine(15) in tRNA + guanine. The protein operates within tRNA modification; archaeosine-tRNA biosynthesis. Exchanges the guanine residue with 7-cyano-7-deazaguanine (preQ0) at position 15 in the dihydrouridine loop (D-loop) of archaeal tRNAs. This chain is tRNA-guanine(15) transglycosylase, found in Methanococcus aeolicus (strain ATCC BAA-1280 / DSM 17508 / OCM 812 / Nankai-3).